Reading from the N-terminus, the 523-residue chain is UDP-glucuronosyltransferase 3A1 (523 aa).

The N-terminal stretch at 1 to 22 (MAAHRSWLLVSFFLLEVLLLEA) is a signal peptide. Residues 23–487 (AKILTISTLS…QPWHEQYMLD (465 aa)) lie on the Extracellular side of the membrane. The N-linked (GlcNAc...) asparagine glycan is linked to Asn-70. Residues 488–508 (VFLFLLGLTLGTLWLSVKVLV) form a helical membrane-spanning segment. At 509 to 523 (AVTRYLSISRKVKQA) the chain is on the cytoplasmic side.

This sequence belongs to the UDP-glycosyltransferase family. In terms of tissue distribution, highly expressed in kidney, while it is expressed at low levels in liver. Not detected in other tissues examined.

The protein resides in the membrane. The enzyme catalyses glucuronate acceptor + UDP-alpha-D-glucuronate = acceptor beta-D-glucuronoside + UDP + H(+). Functionally, UDP-glucuronosyltransferases catalyze phase II biotransformation reactions in which lipophilic substrates are conjugated with glucuronic acid to increase water solubility and enhance excretion. They are of major importance in the conjugation and subsequent elimination of potentially toxic xenobiotics and endogenous compounds. This is UDP-glucuronosyltransferase 3A1 (Ugt3a1) from Mus musculus (Mouse).